Here is a 98-residue protein sequence, read N- to C-terminus: MSMVYANIFLAFIMSLMGLLMYRSHLMSSLLCLEGMMLSLFVMMTATILNNHFTLASMAPIILLVFAACEAALGLSLLVTVSNTYGTDYVQNLNLLQC.

The next 3 helical transmembrane spans lie at 1-21, 29-49, and 61-81; these read MSMV…GLLM, SLLC…ATIL, and IILL…LVTV.

Belongs to the complex I subunit 4L family. In terms of assembly, core subunit of respiratory chain NADH dehydrogenase (Complex I) which is composed of 45 different subunits.

Its subcellular location is the mitochondrion inner membrane. It catalyses the reaction a ubiquinone + NADH + 5 H(+)(in) = a ubiquinol + NAD(+) + 4 H(+)(out). Its function is as follows. Core subunit of the mitochondrial membrane respiratory chain NADH dehydrogenase (Complex I) which catalyzes electron transfer from NADH through the respiratory chain, using ubiquinone as an electron acceptor. Part of the enzyme membrane arm which is embedded in the lipid bilayer and involved in proton translocation. In Pusa caspica (Caspian seal), this protein is NADH-ubiquinone oxidoreductase chain 4L (MT-ND4L).